A 127-amino-acid chain; its full sequence is Glycine cleavage system H protein (127 aa).

A Lipoyl-binding domain is found at 24–105; it reads TALVGITDFA…YNEGWIVKMK (82 aa). Lysine 65 carries the N6-lipoyllysine modification.

This sequence belongs to the GcvH family. The glycine cleavage system is composed of four proteins: P, T, L and H. The cofactor is (R)-lipoate.

Its function is as follows. The glycine cleavage system catalyzes the degradation of glycine. The H protein shuttles the methylamine group of glycine from the P protein to the T protein. This Chlorobaculum tepidum (strain ATCC 49652 / DSM 12025 / NBRC 103806 / TLS) (Chlorobium tepidum) protein is Glycine cleavage system H protein.